Consider the following 920-residue polypeptide: MEKTYDPKAIEKKWADYWEKRQLSKPTAQGSPYCIMLPPPNVTGTLHMGHGFQQTLMDTLIRYHRMKGERTLWQGGTDHAGIATQMVVEQQLAQEDLTREDLGRQAFIKRVWEWRERSGGKITHQMRRLGVSIDWSRERFSMDEGLSRATTEAFIRLHHEGLIYRGKRLVNWDPKLNTAISDLEVVTEEVEGHLWHIRYPLAEGSGHLIIATTRPETLLGDVAIAVHPQDERYQPFVGKKVRLPLTDRTIPVIADEAVDKEFGTGSLKITPGHDFNDYEIGQRHQLPLINILTSEGYLNENVPEPYRGLERFEARKKIIADLQRENLLEKTEPYRVPVPRGERSGVIIEPLLTDQWFIKMEALAKPAMEAVESGELKFIPKNWEKTYLQWLSNIQDWCISRQLWWGHRLPVWYDEEKNSYVGRSREEILKKYHLSPDVKLQQETDVLDTWFSASLWPFATLGWPEKTESFKTFYPTQVLVTGFDIIFFWVARMVMMGLKLTHKIPFHSVYIHGLIRDSQGRKMSKSKGNVIDPIDIIDGISLDALIEKRTHALLQPKMAKTIEKMTRKEFPNGIASFGTDALRFTFCALASRGRDINFDMGRIDGYRNFCNKIWNAARFVTMNTQEKDLNPEKPLSYSAADEWIRTRLQQTIKNAEEALSQYRFDLLAQTLYEFTWNEYCDWYVEFAKCILYDKQAKPAQLRGTRVALLEVLEILLRLLHPVMPFITEEIWQTVAPLAGKEGKSIMVEHWPQFNIHEMNYDAKVEIEWVKNVITAIRTLRAEIGISPAKRIPVIFGKGDEKDKKRIAKMKSYIKTLGKVSQLRFAKHDDCFSATATGIVERLEIHIPLAGVIDKQTEIARLKKEISKLQKEEEKSLKKLDNPNYLQRAPQEVVEKERLSLEKTQNALKKLQSQYASIESL.

The short motif at 40–50 (PNVTGTLHMGH) is the 'HIGH' region element. A 'KMSKS' region motif is present at residues 522–526 (KMSKS). Position 525 (K525) interacts with ATP. Coiled coils occupy residues 642–668 (EWIR…DLLA) and 849–920 (AGVI…IESL).

The protein belongs to the class-I aminoacyl-tRNA synthetase family. ValS type 1 subfamily. As to quaternary structure, monomer.

Its subcellular location is the cytoplasm. The enzyme catalyses tRNA(Val) + L-valine + ATP = L-valyl-tRNA(Val) + AMP + diphosphate. In terms of biological role, catalyzes the attachment of valine to tRNA(Val). As ValRS can inadvertently accommodate and process structurally similar amino acids such as threonine, to avoid such errors, it has a 'posttransfer' editing activity that hydrolyzes mischarged Thr-tRNA(Val) in a tRNA-dependent manner. This Coxiella burnetii (strain RSA 493 / Nine Mile phase I) protein is Valine--tRNA ligase.